Here is a 194-residue protein sequence, read N- to C-terminus: Peptidyl-tRNA hydrolase (194 aa).

Tyr-17 serves as a coordination point for tRNA. Residue His-22 is the Proton acceptor of the active site. TRNA is bound by residues Phe-68, Asn-70, and Asn-116.

Belongs to the PTH family. As to quaternary structure, monomer.

It localises to the cytoplasm. It carries out the reaction an N-acyl-L-alpha-aminoacyl-tRNA + H2O = an N-acyl-L-amino acid + a tRNA + H(+). Hydrolyzes ribosome-free peptidyl-tRNAs (with 1 or more amino acids incorporated), which drop off the ribosome during protein synthesis, or as a result of ribosome stalling. Its function is as follows. Catalyzes the release of premature peptidyl moieties from peptidyl-tRNA molecules trapped in stalled 50S ribosomal subunits, and thus maintains levels of free tRNAs and 50S ribosomes. The protein is Peptidyl-tRNA hydrolase of Proteus mirabilis (strain HI4320).